We begin with the raw amino-acid sequence, 185 residues long: Ribosome-recycling factor (185 aa).

The protein belongs to the RRF family.

The protein localises to the cytoplasm. Responsible for the release of ribosomes from messenger RNA at the termination of protein biosynthesis. May increase the efficiency of translation by recycling ribosomes from one round of translation to another. The chain is Ribosome-recycling factor from Vesicomyosocius okutanii subsp. Calyptogena okutanii (strain HA).